We begin with the raw amino-acid sequence, 91 residues long: Non-hemolytic enterotoxin 105 kDa component (91 aa).

It depends on Zn(2+) as a cofactor.

Its subcellular location is the secreted. This protein is a metalloprotease with gelatinolytic and collagenolytic activity and is a component of the non-hemolytic enterotoxin complex (NHE). In Bacillus cereus, this protein is Non-hemolytic enterotoxin 105 kDa component.